A 437-amino-acid chain; its full sequence is MLLFWWWELGDPCAWTGKGRGTLKMSPATTGTFLLTVYTLFSKVHSDRNVYPSAGVLFVHVLEREYFKGEFPPYPKPGEVSNDPITFNTNLMGYPDRPGWLRYIQRTPYSDGVLYGSPTAENVGKPTIIEITAYNRRTFETARHNLIINIMSAEEFPLPYQAEFFIKNMNVEEMLASEVLGDFLGAVKNVWQPERLNAINITSALDRGGRVPLPIKDMKEGVYVMVGADVAFSSCLREVENPQNQLRCSQEMEPVITCDKKFRTQFYIDWCKISLVDKTKQVSTYQEVVRGEGILPDGGEYKPPSDSLKSRDYYTDFLVTLAVPSAVALVLFLILAYIMCCRREGVEKRNMQTPDIQLVHHSSIQKSTKELRDMSKNREIAWPLSTLPVFHPVTGEIIPPMHTDNYDSTNMPLMQTQPNLPHQTQIPQQQTTGKWYP.

At 1 to 317 the chain is on the extracellular side; the sequence is MLLFWWWELG…LKSRDYYTDF (317 aa). The N-linked (GlcNAc...) asparagine glycan is linked to N200. The chain crosses the membrane as a helical span at residues 318–338; that stretch reads LVTLAVPSAVALVLFLILAYI. The Cytoplasmic segment spans residues 339–437; it reads MCCRREGVEK…QQQTTGKWYP (99 aa).

Belongs to the sarcoglycan alpha/epsilon family. Post-translationally, N-glycosylated. In terms of processing, ubiquitinated, leading to its degradation by the proteasome. In terms of tissue distribution, in both neural tissues including cerebellar cortex, striatum, cerebral cortex, thalamus and hippocampus, and non-neural tissues including quadriceps muscle, liver, kidney, spleen, lung, testis and heart. Widely distributed in the brain, with a robust signal obtained from regions with dense neuronal packing such as the pyramidal cell layer of the hippocampus, cerebellar molecular layer, and cerebral cortex. Levels are highest in kidney, moderate in brain and lung, and low in skeletal muscle, liver, spleen and testis.

Its subcellular location is the cell membrane. It is found in the sarcolemma. The protein resides in the cytoplasm. It localises to the cytoskeleton. The protein localises to the cell projection. Its subcellular location is the dendrite. It is found in the golgi apparatus. Its function is as follows. Component of the sarcoglycan complex, a subcomplex of the dystrophin-glycoprotein complex which forms a link between the F-actin cytoskeleton and the extracellular matrix. The sequence is that of Epsilon-sarcoglycan from Rattus norvegicus (Rat).